We begin with the raw amino-acid sequence, 327 residues long: L-lactate dehydrogenase (327 aa).

Residues Val-18, Asp-39, Arg-44, Tyr-69, and 83–84 (GL) contribute to the NAD(+) site. Substrate is bound by residues Gln-86, Arg-92, and 124-127 (NPVD). NAD(+) contacts are provided by residues 122-124 (AAN) and Ser-147. A substrate-binding site is contributed by 152-155 (DSAR). Residues Arg-157 and His-172 each coordinate beta-D-fructose 1,6-bisphosphate. The active-site Proton acceptor is the His-179. Tyr-224 carries the post-translational modification Phosphotyrosine. Thr-233 serves as a coordination point for substrate.

The protein belongs to the LDH/MDH superfamily. LDH family. In terms of assembly, homotetramer.

It is found in the cytoplasm. It carries out the reaction (S)-lactate + NAD(+) = pyruvate + NADH + H(+). Its pathway is fermentation; pyruvate fermentation to lactate; (S)-lactate from pyruvate: step 1/1. Its activity is regulated as follows. Allosterically activated by fructose 1,6-bisphosphate (FBP). Functionally, catalyzes the conversion of lactate to pyruvate. In Streptococcus suis (strain 98HAH33), this protein is L-lactate dehydrogenase.